Here is a 414-residue protein sequence, read N- to C-terminus: MTPPILIIGAGLSGLTVSRILTNASIPNIVFEASTPDRSQGYAISLRDWGYTSLLTALGDLPLRSLTRGVAPDRILGGTGWIDQALRDNHTGNLLVAPDPEAKQCIVRANRNALRTWIADSGDEEVDIRYGHRLRSVQGSMGNVTATFENGAKYQGSLVIAADGVHSSVRSQILPHVSPDIVPVVVYHGELELPRKEFDNLIRPHSGPSNILAGVGDGFNTPITVCNITPTHVHLDWSYSRPSTENKENKDPLYRPHVSAAEAKQIPPALLEEIASRDLARPWSQLLNAEALPTHRVFNWVSRCVSVTREDVNAAQKQGVVFIGDSWHAMPIFGGEGGNHALVDAVELAEALTGKEGNLDAAVTGYYDRAWRRCQEAVRRSRQRFFQLHRPMREWMEIAEKKKMMAAMKGVEAH.

The FAD site is built by Glu32, Ala43, Arg115, Asp325, and Gly338.

This sequence belongs to the paxM FAD-dependent monooxygenase family. FAD serves as cofactor.

The catalysed reaction is 3-(2,4-dioxopentyl)-3,6,8,9-tetrahydroxy-1-oxo-1,2,3,4-tetrahydroanthracene-2-carboxyl-[ACP] + NADPH + O2 + H(+) = 3-(2,4-dioxopentyl)-2,3,6,8,9-pentahydroxy-1-oxo-1,2,3,4-tetrahydroanthracene-2-carboxyl-[ACP] + NADP(+) + H2O. It participates in secondary metabolite biosynthesis. Its function is as follows. FAD-dependent monooxygenase; part of the gene cluster that mediates the biosynthesis of the linear tetracyclic TAN-1612 neuropeptide Y receptor antagonist. The decaketide backbone of TAN-1612 is synthesized by the non-reducing polyketide synthase adaA via condensation of one acetyl-CoA starter unit with 9 malonyl-CoA units. The FAD-dependent monooxygenase adaC then performs hydroxylation at C2 while the polaketide chain is still attached to the NRPKS adaA. The alpha-hydroxylation step at C2 appears to be crucial for the following C18-C1 Claisen cyclization and release of the C9-hydroxyl version of TAN-1612 from the NRPKS adaA, two steps performed by the lactamase-like protein adaB. Finally, the O-methyltransferase adaD performs the C9 O-methylation to complete the biosynthesis of TAN-1612. This Aspergillus niger (strain ATCC MYA-4892 / CBS 513.88 / FGSC A1513) protein is FAD-dependent monooxygenase adaC.